The chain runs to 145 residues: Ribosome-binding factor A (145 aa).

A compositionally biased stretch (basic and acidic residues) spans Lys-122–Arg-132. The disordered stretch occupies residues Lys-122–Asp-145.

It belongs to the RbfA family. In terms of assembly, monomer. Binds 30S ribosomal subunits, but not 50S ribosomal subunits or 70S ribosomes.

The protein localises to the cytoplasm. Functionally, one of several proteins that assist in the late maturation steps of the functional core of the 30S ribosomal subunit. Associates with free 30S ribosomal subunits (but not with 30S subunits that are part of 70S ribosomes or polysomes). Required for efficient processing of 16S rRNA. May interact with the 5'-terminal helix region of 16S rRNA. In Methylorubrum extorquens (strain CM4 / NCIMB 13688) (Methylobacterium extorquens), this protein is Ribosome-binding factor A.